The sequence spans 553 residues: Telomere repeat-binding protein 2 (553 aa).

Positions serine 147–serine 170 are disordered. A Ubiquitin-like domain is found at valine 285–glutamate 364. The tract at residues alanine 394 to glycine 413 is disordered. Residues alanine 448–arginine 507 form the HTH myb-type domain. A DNA-binding region (H-T-H motif) is located at residues tryptophan 476 to valine 503.

In terms of assembly, homodimer and heterodimer with TRP1. Interacts with SNL1. In terms of tissue distribution, expressed ubiquitously. Highest expression in flowers and leaves.

It is found in the nucleus. In terms of biological role, binds specifically to the plant telomeric double-stranded DNA sequences. At least 2 repeats of telomeric sequences are required for binding. Induces DNA bending. The protein is Telomere repeat-binding protein 2 (TRP2) of Arabidopsis thaliana (Mouse-ear cress).